We begin with the raw amino-acid sequence, 296 residues long: NAD kinase (296 aa).

Catalysis depends on Asp-72, which acts as the Proton acceptor. Residues 72–73 (DG), 146–147 (ND), Arg-157, Lys-174, Asp-176, 187–192 (TAYALS), and Gln-247 each bind NAD(+).

This sequence belongs to the NAD kinase family. A divalent metal cation serves as cofactor.

Its subcellular location is the cytoplasm. It carries out the reaction NAD(+) + ATP = ADP + NADP(+) + H(+). In terms of biological role, involved in the regulation of the intracellular balance of NAD and NADP, and is a key enzyme in the biosynthesis of NADP. Catalyzes specifically the phosphorylation on 2'-hydroxyl of the adenosine moiety of NAD to yield NADP. In Pseudomonas putida (strain ATCC 700007 / DSM 6899 / JCM 31910 / BCRC 17059 / LMG 24140 / F1), this protein is NAD kinase.